Consider the following 62-residue polypeptide: Large ribosomal subunit protein bL35 (62 aa).

Positions 1 to 26 (MPKMKTKSGLKKRIKITATGKVKRGN) are enriched in basic residues. Residues 1–62 (MPKMKTKSGL…SDFKRYKELI (62 aa)) are disordered. Basic and acidic residues predominate over residues 53–62 (SDFKRYKELI).

This sequence belongs to the bacterial ribosomal protein bL35 family.

This is Large ribosomal subunit protein bL35 from Metamycoplasma arthritidis (strain 158L3-1) (Mycoplasma arthritidis).